Reading from the N-terminus, the 426-residue chain is Histidine--tRNA ligase (426 aa).

This sequence belongs to the class-II aminoacyl-tRNA synthetase family.

It localises to the cytoplasm. The catalysed reaction is tRNA(His) + L-histidine + ATP = L-histidyl-tRNA(His) + AMP + diphosphate + H(+). The protein is Histidine--tRNA ligase of Saccharolobus islandicus (strain M.16.27) (Sulfolobus islandicus).